The sequence spans 78 residues: Small ribosomal subunit protein bS20 (78 aa).

This sequence belongs to the bacterial ribosomal protein bS20 family.

In terms of biological role, binds directly to 16S ribosomal RNA. This is Small ribosomal subunit protein bS20 from Streptococcus sanguinis (strain SK36).